Consider the following 315-residue polypeptide: MIEMEKPKVEVFEISDDSTYGKFVVEPLERGYGTTLGNSLRRIMLSSLPGAAVTSVKIEGILHEFSTIPGVKEDVTEIILNLKDLSIGIDGNEPKTLRIEMEGPGTVTAGDIIADADVEVLNPDMYIATLDDNSKLNMEINIAKGRGYVSAENNKTAGMPIGVIPVDSIFTPVRKVSYFVGNTRVGQVTDYDKLEIEVFTDGSIKPDEAISLAAKVMSEHLNLFITLKEDVSDVEIMVQKEEDKKEKVLEMTIEELDLSVRSYNCLKRAGINTVEELSLKSEEDMMKVRNLGKKSLEEVDKKLEELGLGLRPSDE.

Residues 1–228 are alpha N-terminal domain (alpha-NTD); the sequence is MIEMEKPKVE…EHLNLFITLK (228 aa). The alpha C-terminal domain (alpha-CTD) stretch occupies residues 245–315; that stretch reads KEKVLEMTIE…LGLGLRPSDE (71 aa).

It belongs to the RNA polymerase alpha chain family. In terms of assembly, homodimer. The RNAP catalytic core consists of 2 alpha, 1 beta, 1 beta' and 1 omega subunit. When a sigma factor is associated with the core the holoenzyme is formed, which can initiate transcription.

It catalyses the reaction RNA(n) + a ribonucleoside 5'-triphosphate = RNA(n+1) + diphosphate. Its function is as follows. DNA-dependent RNA polymerase catalyzes the transcription of DNA into RNA using the four ribonucleoside triphosphates as substrates. The chain is DNA-directed RNA polymerase subunit alpha from Alkaliphilus metalliredigens (strain QYMF).